Here is a 277-residue protein sequence, read N- to C-terminus: 5'-nucleotidase SurE (277 aa).

Residues D14, D15, S46, and N104 each contribute to the a divalent metal cation site.

The protein belongs to the SurE nucleotidase family. Requires a divalent metal cation as cofactor.

The protein resides in the cytoplasm. The catalysed reaction is a ribonucleoside 5'-phosphate + H2O = a ribonucleoside + phosphate. Functionally, nucleotidase that shows phosphatase activity on nucleoside 5'-monophosphates. The polypeptide is 5'-nucleotidase SurE (Picosynechococcus sp. (strain ATCC 27264 / PCC 7002 / PR-6) (Agmenellum quadruplicatum)).